Here is a 369-residue protein sequence, read N- to C-terminus: Aminomethyltransferase (369 aa).

The protein belongs to the GcvT family. The glycine cleavage system is composed of four proteins: P, T, L and H.

The catalysed reaction is N(6)-[(R)-S(8)-aminomethyldihydrolipoyl]-L-lysyl-[protein] + (6S)-5,6,7,8-tetrahydrofolate = N(6)-[(R)-dihydrolipoyl]-L-lysyl-[protein] + (6R)-5,10-methylene-5,6,7,8-tetrahydrofolate + NH4(+). The glycine cleavage system catalyzes the degradation of glycine. This Alkaliphilus metalliredigens (strain QYMF) protein is Aminomethyltransferase.